Reading from the N-terminus, the 830-residue chain is AdoMet-dependent rRNA methyltransferase SPB1 (830 aa).

Gly58, Trp60, Asp78, Asp94, and Asp119 together coordinate S-adenosyl-L-methionine. Lys159 (proton acceptor) is an active-site residue. A coiled-coil region spans residues 345–388 (LTEEEQIEKELQEMQQKQNLKKKREKRKQNEIKQKEITRMQMQM). Disordered stretches follow at residues 485 to 529 (AKEA…SDSD) and 565 to 642 (EADL…AREV). Acidic residues-rich tracts occupy residues 516 to 529 (VDDD…SDSD), 591 to 610 (VSEE…DSDF), and 618 to 630 (DESD…EDEA). The segment covering 631–642 (ERSQKEKHAREV) has biased composition (basic and acidic residues).

Belongs to the class I-like SAM-binding methyltransferase superfamily. RNA methyltransferase RlmE family. SPB1 subfamily. As to quaternary structure, component of the nucleolar and nucleoplasmic pre-60S ribosomal particle.

It localises to the nucleus. The protein localises to the nucleolus. It catalyses the reaction a ribonucleotide in rRNA + S-adenosyl-L-methionine = a 2'-O-methylribonucleotide in rRNA + S-adenosyl-L-homocysteine + H(+). In terms of biological role, required for proper assembly of pre-ribosomal particles during the biogenesis of the 60S ribosomal subunit. This chain is AdoMet-dependent rRNA methyltransferase SPB1, found in Eremothecium gossypii (strain ATCC 10895 / CBS 109.51 / FGSC 9923 / NRRL Y-1056) (Yeast).